Consider the following 356-residue polypeptide: uncharacterized protein (356 aa).

Residue 37–44 (TGASSGIG) participates in NADP(+) binding. Residue S168 participates in substrate binding. Y181 (proton acceptor) is an active-site residue.

This sequence belongs to the short-chain dehydrogenases/reductases (SDR) family.

This is an uncharacterized protein from Bacillus subtilis (strain 168).